Consider the following 419-residue polypeptide: DNA primase DnaG (419 aa).

A Toprim domain is found at 168–244; the sequence is DTIIVVEGRS…KVDYVARAPE (77 aa). Mg(2+) is bound by residues E174, D218, and D220. Basic and acidic residues-rich tracts occupy residues 280 to 291 and 306 to 316; these read KPAEEAVKREEE and KAAKPPEEKPP. The interval 280–317 is disordered; it reads KPAEEAVKREEEAAAEAKPPAPAVQEKAAKPPEEKPPT.

The protein belongs to the archaeal DnaG primase family. Forms a ternary complex with MCM helicase and DNA. Component of the archaeal exosome complex. Mg(2+) serves as cofactor.

It carries out the reaction ssDNA + n NTP = ssDNA/pppN(pN)n-1 hybrid + (n-1) diphosphate.. Functionally, RNA polymerase that catalyzes the synthesis of short RNA molecules used as primers for DNA polymerase during DNA replication. Also part of the exosome, which is a complex involved in RNA degradation. Acts as a poly(A)-binding protein that enhances the interaction between heteromeric, adenine-rich transcripts and the exosome. The chain is DNA primase DnaG from Aeropyrum pernix (strain ATCC 700893 / DSM 11879 / JCM 9820 / NBRC 100138 / K1).